Here is a 355-residue protein sequence, read N- to C-terminus: Guanine nucleotide-binding protein G(i) subunit alpha-2 (355 aa).

Glycine 2 carries the N-myristoyl glycine lipid modification. Cysteine 3 carries the S-palmitoyl cysteine lipid modification. The G-alpha domain occupies 32–355 (REVKLLLLGA…KNNLKDCGLF (324 aa)). The interval 35 to 48 (KLLLLGAGESGKST) is G1 motif. Residues 40–47 (GAGESGKS), 176–182 (LRTRVKT), 201–205 (DVGGQ), 270–273 (NKKD), and alanine 327 each bind GTP. The Mg(2+) site is built by serine 47 and threonine 182. Positions 174–182 (DVLRTRVKT) are G2 motif. Residues 197-206 (FKMFDVGGQR) form a G3 motif region. Residues 266–273 (ILFLNKKD) form a G4 motif region. The interval 325–330 (TCATDT) is G5 motif.

The protein belongs to the G-alpha family. G(i/o/t/z) subfamily. G proteins are composed of 3 units; alpha, beta and gamma. The alpha chain contains the guanine nucleotide binding site. In this context, interacts with GNB2. Interacts with UNC5B. Interacts with GPSM1. Interacts with RGS12 and RGS14. Interacts (inactive GDP-bound form) with NUCB1 (via GBA motif); the interaction leads to activation of GNAI3. Interacts (inactive GDP-bound form) with CCDC88C/DAPLE (via GBA motif). Interacts (inactive GDP-bound form) with CCDC8A/GIV (via GBA motif). As to expression, ubiquitously expressed. Most abundant in the lung and in the spleen.

It localises to the cytoplasm. It is found in the cytoskeleton. The protein localises to the microtubule organizing center. Its subcellular location is the centrosome. The protein resides in the cell membrane. It localises to the membrane. In terms of biological role, guanine nucleotide-binding proteins (G proteins) are involved as modulators or transducers in various transmembrane signaling systems. The G(i) proteins are involved in hormonal regulation of adenylate cyclase: they inhibit the cyclase in response to beta-adrenergic stimuli. May play a role in cell division. The chain is Guanine nucleotide-binding protein G(i) subunit alpha-2 (GNAI2) from Cavia porcellus (Guinea pig).